We begin with the raw amino-acid sequence, 205 residues long: Iron-sulfur assembly protein 2 (205 aa).

Fe cation-binding residues include C131, C196, and C198.

This sequence belongs to the HesB/IscA family.

It localises to the mitochondrion matrix. In terms of biological role, involved in the assembly of mitochondrial and cytoplasmic iron-sulfur proteins. Probably involved in the binding of an intermediate of Fe/S cluster assembly. The sequence is that of Iron-sulfur assembly protein 2 (isa2) from Schizosaccharomyces pombe (strain 972 / ATCC 24843) (Fission yeast).